The following is a 597-amino-acid chain: Ribosomal oxygenase 1 (597 aa).

M1 carries the post-translational modification N-acetylmethionine. The disordered stretch occupies residues 1–138 (MDELPNGNGA…HVDDPERPWD (138 aa)). Basic residues-rich tracts occupy residues 14 to 24 (KRGRGRRRRQP) and 37 to 48 (RPRKVRRHRKSA). Low complexity predominate over residues 49-62 (ASRVAALRARALLS). Residues S62 and S65 each carry the phosphoserine modification. The span at 72–81 (VRGKRERPAE) shows a compositional bias: basic and acidic residues. The residue at position 86 (S86) is a Phosphoserine. The region spanning 250–395 (CSLRLLCPQA…DFLEAVLPLA (146 aa)) is the JmjC domain. Fe cation contacts are provided by H296, D298, and H361.

The protein belongs to the ROX family. NO66 subfamily. In terms of assembly, interacts with SP7/OSX; the interaction is direct. Interacts with MYC. Interacts with PHF19; leading to its recruitment to H3K36me3 sites. Fe(2+) serves as cofactor.

The protein resides in the nucleus. It is found in the nucleolus. It localises to the nucleoplasm. It carries out the reaction N(6),N(6)-dimethyl-L-lysyl(36)-[histone H3] + 2 2-oxoglutarate + 2 O2 = L-lysyl(36)-[histone H3] + 2 formaldehyde + 2 succinate + 2 CO2. The enzyme catalyses N(6)-methyl-L-lysyl-[protein] + 2-oxoglutarate + O2 = L-lysyl-[protein] + formaldehyde + succinate + CO2. The catalysed reaction is L-histidyl-[protein] + 2-oxoglutarate + O2 = (3S)-3-hydroxy-L-histidyl-[protein] + succinate + CO2. Functionally, oxygenase that can act as both a histone lysine demethylase and a ribosomal histidine hydroxylase. Specifically demethylates 'Lys-4' (H3K4me) and 'Lys-36' (H3K36me) of histone H3, thereby playing a central role in histone code. Preferentially demethylates trimethylated H3 'Lys-4' (H3K4me3) and monomethylated H3 'Lys-4' (H3K4me1) residues, while it has weaker activity for dimethylated H3 'Lys-36' (H3K36me2). Acts as a regulator of osteoblast differentiation via its interaction with SP7/OSX by demethylating H3K4me and H3K36me, thereby inhibiting SP7/OSX-mediated promoter activation. Also catalyzes demethylation of non-histone proteins, such as CGAS: demethylation of monomethylated CGAS promotes interaction between CGAS and PARP1, followed by PARP1 inactivation. Also catalyzes the hydroxylation of 60S ribosomal protein L8 on 'His-216', thereby playing a role in ribosome biogenesis. Participates in MYC-induced transcriptional activation. This is Ribosomal oxygenase 1 from Rattus norvegicus (Rat).